A 123-amino-acid polypeptide reads, in one-letter code: Small ribosomal subunit protein uS11 (123 aa).

Belongs to the universal ribosomal protein uS11 family. As to quaternary structure, part of the 30S ribosomal subunit. Interacts with proteins S7 and S18. Binds to IF-3.

Functionally, located on the platform of the 30S subunit, it bridges several disparate RNA helices of the 16S rRNA. Forms part of the Shine-Dalgarno cleft in the 70S ribosome. This is Small ribosomal subunit protein uS11 from Coxiella burnetii (strain CbuK_Q154) (Coxiella burnetii (strain Q154)).